Reading from the N-terminus, the 617-residue chain is uncharacterized protein (617 aa).

Composition is skewed to low complexity over residues 1 to 16 (MSKC…SNSS) and 36 to 45 (STTSSNGSNS). The interval 1-49 (MSKCATPTPSTSSNSSDEAKRSPQPMSRGFPQRNMSTTSSNGSNSPRHR) is disordered. 3 helical membrane-spanning segments follow: residues 219 to 239 (LMIG…GGLA), 262 to 282 (TAGA…FTGY), and 427 to 447 (PITL…LLTM).

The protein belongs to the TMCO4 family.

The protein localises to the membrane. This is an uncharacterized protein from Caenorhabditis elegans.